The chain runs to 87 residues: Small ribosomal subunit protein uS15 (87 aa).

Belongs to the universal ribosomal protein uS15 family. In terms of assembly, part of the 30S ribosomal subunit. Forms a bridge to the 50S subunit in the 70S ribosome, contacting the 23S rRNA.

One of the primary rRNA binding proteins, it binds directly to 16S rRNA where it helps nucleate assembly of the platform of the 30S subunit by binding and bridging several RNA helices of the 16S rRNA. In terms of biological role, forms an intersubunit bridge (bridge B4) with the 23S rRNA of the 50S subunit in the ribosome. This chain is Small ribosomal subunit protein uS15, found in Cutibacterium acnes (strain DSM 16379 / KPA171202) (Propionibacterium acnes).